Reading from the N-terminus, the 155-residue chain is Protein-export protein SecB (155 aa).

Belongs to the SecB family. In terms of assembly, homotetramer, a dimer of dimers. One homotetramer interacts with 1 SecA dimer.

The protein resides in the cytoplasm. Its function is as follows. One of the proteins required for the normal export of preproteins out of the cell cytoplasm. It is a molecular chaperone that binds to a subset of precursor proteins, maintaining them in a translocation-competent state. It also specifically binds to its receptor SecA. The sequence is that of Protein-export protein SecB from Escherichia coli O127:H6 (strain E2348/69 / EPEC).